Consider the following 295-residue polypeptide: Small ribosomal subunit protein mS23 (295 aa).

The interval 249-295 (IGSVVEEEKSQSSLFEDLLSNDNLQSEPEVEQSGQQQQQEQPKQETN) is disordered. The segment covering 273–289 (QSEPEVEQSGQQQQQEQ) has biased composition (low complexity).

Belongs to the mitochondrion-specific ribosomal protein mS23 family. In terms of assembly, component of the mitochondrial small ribosomal subunit (mt-SSU).

The protein resides in the mitochondrion. Functionally, component of the mitochondrial ribosome (mitoribosome), a dedicated translation machinery responsible for the synthesis of mitochondrial genome-encoded proteins, including at least some of the essential transmembrane subunits of the mitochondrial respiratory chain. The mitoribosomes are attached to the mitochondrial inner membrane and translation products are cotranslationally integrated into the membrane. This Candida albicans (strain SC5314 / ATCC MYA-2876) (Yeast) protein is Small ribosomal subunit protein mS23 (RSM25).